A 647-amino-acid chain; its full sequence is Pre-mRNA-splicing factor SLU7 (647 aa).

The span at 1-19 shows a compositional bias: polar residues; the sequence is MASYKQNLPPSALIKQQVN. Residues 1–44 are disordered; that stretch reads MASYKQNLPPSALIKQQVNVADKKSKAEVQRDRQLEEDRKAGTA. Residues 21–41 show a composition bias toward basic and acidic residues; sequence ADKKSKAEVQRDRQLEEDRKA. A CCHC-type zinc finger spans residues 113 to 130; sequence GACENCGAMGHQKRDCFD. 2 disordered regions span residues 193-212 and 465-620; these read HEMKEGEVEPATTEDGAPKD and EVKE…KEME. Positions 465–479 are enriched in basic and acidic residues; that stretch reads EVKEEKEKEDSIKDE. The span at 480–491 shows a compositional bias: acidic residues; sequence VAEENSDNDNDE. Positions 513–533 are enriched in basic and acidic residues; sequence EKEREKERLIEKERRERDQRR. The segment covering 534-555 has biased composition (basic residues); sequence RDKKREKRERKKAKLGKRKRRH. Residues 588–606 show a composition bias toward basic and acidic residues; that stretch reads EKAEGMKAAREGDRGRKYN.

This sequence belongs to the SLU7 family.

The protein resides in the nucleus. Its function is as follows. Participates in the second catalytic step of pre-mRNA splicing, when the free hydroxyl group of exon I attacks the 3'-splice site to generate spliced mRNA and the excised lariat intron. The polypeptide is Pre-mRNA-splicing factor SLU7 (Caenorhabditis elegans).